A 155-amino-acid chain; its full sequence is Large ribosomal subunit protein uL22c (155 aa).

Belongs to the universal ribosomal protein uL22 family. Part of the 50S ribosomal subunit.

It is found in the plastid. Its subcellular location is the chloroplast. Functionally, this protein binds specifically to 23S rRNA. The globular domain of the protein is located near the polypeptide exit tunnel on the outside of the subunit, while an extended beta-hairpin is found that lines the wall of the exit tunnel in the center of the 70S ribosome. This chain is Large ribosomal subunit protein uL22c (rpl22), found in Coffea arabica (Arabian coffee).